Here is a 1023-residue protein sequence, read N- to C-terminus: 2-oxoglutarate dehydrogenase complex component E1 (1023 aa).

The transit peptide at 1-40 directs the protein to the mitochondrion; that stretch reads MFHLRTCAAKLRPLTASQTVKTFSQNRPAAARTFGQIRCY. K74 carries the post-translational modification N6-succinyllysine. At S100 the chain carries Phosphoserine. The Ca(2+) site is built by H143, D156, and D158. Residue R312 coordinates thiamine diphosphate. Position 401 is an N6-acetyllysine (K401). Residues D411, N444, and I446 each coordinate thiamine diphosphate. Mg(2+) is bound by residues D411, N444, and I446. K534 participates in a covalent cross-link: Glycyl lysine isopeptide (Lys-Gly) (interchain with G-Cter in ubiquitin). An N6-succinyllysine modification is found at K564. Residue Q676 coordinates thiamine diphosphate. An N6-acetyllysine modification is found at K970.

Belongs to the alpha-ketoglutarate dehydrogenase family. In terms of assembly, homodimer. The 2-oxoglutarate dehydrogenase complex is composed of OGDH (2-oxoglutarate dehydrogenase; E1), DLST (dihydrolipoamide succinyltransferase; E2), DLD (dihydrolipoamide dehydrogenase; E3) and the assembly factor KGD4. It contains multiple copies of the three enzymatic components (E1, E2 and E3). In the nucleus, the 2-oxoglutarate dehydrogenase complex associates with KAT2A. Interacts with ABHD11; this interaction maintains the functional lipoylation of the 2-oxoglutarate dehydrogenase complex. The cofactor is thiamine diphosphate. Mg(2+) is required as a cofactor.

It localises to the mitochondrion. The protein resides in the nucleus. It carries out the reaction N(6)-[(R)-lipoyl]-L-lysyl-[protein] + 2-oxoglutarate + H(+) = N(6)-[(R)-S(8)-succinyldihydrolipoyl]-L-lysyl-[protein] + CO2. With respect to regulation, calcium ions and ADP stimulate, whereas ATP and NADH reduce catalytic activity. Its function is as follows. 2-oxoglutarate dehydrogenase (E1o) component of the 2-oxoglutarate dehydrogenase complex (OGDHC). Participates in the first step, rate limiting for the overall conversion of 2-oxoglutarate to succinyl-CoA and CO(2) catalyzed by the whole OGDHC. Catalyzes the irreversible decarboxylation of 2-oxoglutarate (alpha-ketoglutarate) via the thiamine diphosphate (ThDP) cofactor and subsequent transfer of the decarboxylated acyl intermediate on an oxidized dihydrolipoyl group that is covalently amidated to the E2 enzyme (dihydrolipoyllysine-residue succinyltransferase or DLST). Plays a key role in the Krebs (citric acid) cycle, which is a common pathway for oxidation of fuel molecules, including carbohydrates, fatty acids, and amino acids. Can catalyze the decarboxylation of 2-oxoadipate in vitro, but at a much lower rate than 2-oxoglutarate. Mainly active in the mitochondrion. A fraction of the 2-oxoglutarate dehydrogenase complex also localizes in the nucleus and is required for lysine succinylation of histones: associates with KAT2A on chromatin and provides succinyl-CoA to histone succinyltransferase KAT2A. The sequence is that of 2-oxoglutarate dehydrogenase complex component E1 from Bos taurus (Bovine).